The sequence spans 175 residues: ATP synthase subunit delta (175 aa).

Belongs to the ATPase delta chain family. As to quaternary structure, F-type ATPases have 2 components, F(1) - the catalytic core - and F(0) - the membrane proton channel. F(1) has five subunits: alpha(3), beta(3), gamma(1), delta(1), epsilon(1). F(0) has three main subunits: a(1), b(2) and c(10-14). The alpha and beta chains form an alternating ring which encloses part of the gamma chain. F(1) is attached to F(0) by a central stalk formed by the gamma and epsilon chains, while a peripheral stalk is formed by the delta and b chains.

It is found in the cell inner membrane. In terms of biological role, f(1)F(0) ATP synthase produces ATP from ADP in the presence of a proton or sodium gradient. F-type ATPases consist of two structural domains, F(1) containing the extramembraneous catalytic core and F(0) containing the membrane proton channel, linked together by a central stalk and a peripheral stalk. During catalysis, ATP synthesis in the catalytic domain of F(1) is coupled via a rotary mechanism of the central stalk subunits to proton translocation. This protein is part of the stalk that links CF(0) to CF(1). It either transmits conformational changes from CF(0) to CF(1) or is implicated in proton conduction. The polypeptide is ATP synthase subunit delta (Xanthomonas oryzae pv. oryzae (strain PXO99A)).